The sequence spans 200 residues: ATP-dependent Clp protease proteolytic subunit (200 aa).

Serine 103 (nucleophile) is an active-site residue. Histidine 128 is a catalytic residue.

This sequence belongs to the peptidase S14 family. In terms of assembly, fourteen ClpP subunits assemble into 2 heptameric rings which stack back to back to give a disk-like structure with a central cavity, resembling the structure of eukaryotic proteasomes.

The protein localises to the cytoplasm. The enzyme catalyses Hydrolysis of proteins to small peptides in the presence of ATP and magnesium. alpha-casein is the usual test substrate. In the absence of ATP, only oligopeptides shorter than five residues are hydrolyzed (such as succinyl-Leu-Tyr-|-NHMec, and Leu-Tyr-Leu-|-Tyr-Trp, in which cleavage of the -Tyr-|-Leu- and -Tyr-|-Trp bonds also occurs).. In terms of biological role, cleaves peptides in various proteins in a process that requires ATP hydrolysis. Has a chymotrypsin-like activity. Plays a major role in the degradation of misfolded proteins. This chain is ATP-dependent Clp protease proteolytic subunit, found in Vibrio vulnificus (strain CMCP6).